Reading from the N-terminus, the 564-residue chain is Alpha-farnesene synthase (564 aa).

4 residues coordinate Mg(2+): D313, D317, T464, and E468. The DDXXD motif motif lies at 313–317 (DDVYD).

This sequence belongs to the terpene synthase family. Requires Mg(2+) as cofactor.

The catalysed reaction is (2E,6E)-farnesyl diphosphate = (3E,6E)-alpha-farnesene + diphosphate. Its function is as follows. Catalyzes the cyclization of farnesyl diphosphate to (E,E)-alpha-farnesene. The chain is Alpha-farnesene synthase (TPS7) from Ricinus communis (Castor bean).